A 114-amino-acid polypeptide reads, in one-letter code: Phycoerythrin alpha-1 subunit (114 aa).

(2R,3E)-phycoerythrobilin contacts are provided by D52, S53, E63, R64, C67, T72, K74, A75, and K84.

Belongs to the phycoerythrin family. Heterotetramer of 2 different alpha chains and 2 identical beta chains which form 2 alpha-beta heterodimers within the heterotetramer. The two alpha-beta heterodimers are rotated to an open configuration in contrast to the closed configuration found in other cryptophyte species due to the insertion of a single amino acid, Asp-65, in a conserved region of the alpha chain. In the open form, the central chromophores are not in physical contact but are separated by a water-filled channel. In terms of processing, contains three phycoerythrobilin chromophores with binding mediated by both the alpha and beta subunits.

The protein localises to the plastid. It localises to the chloroplast thylakoid membrane. In terms of biological role, light-harvesting photosynthetic tetrapyrrole chromophore-protein from the phycobiliprotein complex. The protein is Phycoerythrin alpha-1 subunit of Hemiselmis andersenii (Cryptophyte alga).